Reading from the N-terminus, the 1213-residue chain is Probable ATP-binding protein BrxC (1213 aa).

It belongs to the BrxC family.

Its function is as follows. BREX systems (bacteriophage exclusion) provide immunity against bacteriophage. Part of a type 1 BREX system which protects against dsDNA phage. This system allows phage adsorption but prevents phage DNA replication, without degradation of the phage DNA. Methylation of bacterial DNA by PglX guides self/non-self discrimination. When the brxA-brxB-brxC-pglX-pglZ-brxL genes are transformed into a susceptible E.coli strain (BW25113) they confer very high resistance to infection by bacteriophage VR7 and VpaE1, about 100-fold protection against lambda, T5 and T7 and no protection against RNA phage Qbeta, ssDNA phage M13 or dSDNA phage T4 and VR5. Glycosylated phage DNA is not susceptible to BREX. The BREX system does not confer resistance to lysogenic lambda phage, i.e. prophage that are integrated into the chromosomal DNA and then induced to form phage. This Escherichia coli O9:H4 (strain HS) protein is Probable ATP-binding protein BrxC.